The sequence spans 144 residues: Snaclec coagulation factor IX/factor X-binding protein subunit B1 (144 aa).

An N-terminal signal peptide occupies residues 1-23 (MGRFIFVSFGLLVVFLSLSGTAA). 3 disulfide bridges follow: Cys-25/Cys-36, Cys-53/Cys-142, and Cys-119/Cys-134. In terms of domain architecture, C-type lectin spans 32–143 (YEGHCYKPFN…CRMMANFVCE (112 aa)).

Belongs to the snaclec family. Heterodimer of subunits A and B1; disulfide-linked. As to expression, expressed by the venom gland.

The protein localises to the secreted. Anticoagulant protein which binds to the gamma-carboxyglutamic acid-domain regions of factors IX (F9) and factor X (F10) in the presence of calcium with a 1 to 1 stoichiometry. The sequence is that of Snaclec coagulation factor IX/factor X-binding protein subunit B1 from Trimeresurus stejnegeri (Chinese green tree viper).